Consider the following 74-residue polypeptide: UPF0435 protein GTNG_0390 (74 aa).

The protein belongs to the UPF0435 family.

This Geobacillus thermodenitrificans (strain NG80-2) protein is UPF0435 protein GTNG_0390.